Consider the following 151-residue polypeptide: Large ribosomal subunit protein uL22 (151 aa).

A disordered region spans residues 1–25; it reads MARINYSVKEDPETTSKAMGSELHI.

Belongs to the universal ribosomal protein uL22 family. As to quaternary structure, part of the 50S ribosomal subunit.

Its function is as follows. This protein binds specifically to 23S rRNA. It makes multiple contacts with different domains of the 23S rRNA in the assembled 50S subunit and ribosome. Functionally, the globular domain of the protein is located near the polypeptide exit tunnel on the outside of the subunit, while an extended beta-hairpin is found that lines the wall of the exit tunnel in the center of the 70S ribosome. The chain is Large ribosomal subunit protein uL22 from Methanosarcina barkeri (strain Fusaro / DSM 804).